The following is a 129-amino-acid chain: Snaclec rhodocetin subunit beta (129 aa).

The C-type lectin domain occupies 3 to 125; the sequence is RCPTTWSASK…EEKNAFLCKF (123 aa). 3 cysteine pairs are disulfide-bonded: C4–C15, C32–C123, and C98–C115.

In terms of assembly, heterotetramer of subunit alpha, beta, gamma and delta; only the gamma and the delta subunits are disulfide-linked. Alpha-beta heterodimer and gamma-delta heterodimer associate orthogonally, giving a cruciform conformation. This heterotetramer may covalently dimerizes thanks to the gamma subunit. As to expression, expressed by the venom gland.

It is found in the secreted. Its function is as follows. Potent inhibitor of collagen-induced platelet aggregation. It acts by binding to the integrin alpha2A domain and blocks collagen binding to integrin alpha-2/beta-1 (ITGA2/ITGB1). The gamma/delta subunits mainly contribute to this activity. The sequence is that of Snaclec rhodocetin subunit beta from Calloselasma rhodostoma (Malayan pit viper).